We begin with the raw amino-acid sequence, 1025 residues long: Putative calcium-transporting ATPase 11, plasma membrane-type (1025 aa).

At Met-1–Ser-157 the chain is on the cytoplasmic side. Residues Ala-19 to Val-30 form an interaction with calmodulin region. The chain crosses the membrane as a helical span at residues Phe-158–Ala-178. At Val-179–Tyr-196 the chain is on the lumenal side. A helical transmembrane segment spans residues Asp-197 to Tyr-217. Over Lys-218–Leu-345 the chain is Cytoplasmic. The helical transmembrane segment at Asn-346 to Val-365 threads the bilayer. The Lumenal portion of the chain corresponds to Val-366–Tyr-395. Residues Phe-396–Leu-413 traverse the membrane as a helical segment. The Cytoplasmic portion of the chain corresponds to Ala-414–Ile-801. Catalysis depends on Asp-451, which acts as the 4-aspartylphosphate intermediate. Mg(2+) is bound by residues Asp-746 and Asp-750. A helical membrane pass occupies residues Gln-802–Phe-820. Over Val-821–Leu-831 the chain is Lumenal. The chain crosses the membrane as a helical span at residues Thr-832–Ala-852. The Cytoplasmic portion of the chain corresponds to Thr-853–Phe-872. A helical membrane pass occupies residues Ile-873–Leu-895. The Lumenal segment spans residues Asn-896 to Gly-907. Residues Pro-908–Asn-929 traverse the membrane as a helical segment. The Cytoplasmic segment spans residues Glu-930–Lys-947. The chain crosses the membrane as a helical span at residues Ser-948–Leu-969. The Lumenal portion of the chain corresponds to Gly-970–Ser-979. A helical transmembrane segment spans residues Trp-980–Lys-1001. Residues Cys-1002–Ala-1025 lie on the Cytoplasmic side of the membrane.

Belongs to the cation transport ATPase (P-type) (TC 3.A.3) family. Type IIB subfamily.

The protein resides in the membrane. The enzyme catalyses Ca(2+)(in) + ATP + H2O = Ca(2+)(out) + ADP + phosphate + H(+). Activated by calmodulin. In terms of biological role, this magnesium-dependent enzyme catalyzes the hydrolysis of ATP coupled with the translocation of calcium from the cytosol out of the cell or into organelles. In Arabidopsis thaliana (Mouse-ear cress), this protein is Putative calcium-transporting ATPase 11, plasma membrane-type (ACA11).